Here is a 457-residue protein sequence, read N- to C-terminus: Siroheme synthase (457 aa).

The segment at 1–204 (MDHLPIFCQL…ADEKAVNATT (204 aa)) is precorrin-2 dehydrogenase /sirohydrochlorin ferrochelatase. NAD(+) is bound by residues 22–23 (DV) and 43–44 (LT). At S128 the chain carries Phosphoserine. The segment at 216–457 (GEVVLVGAGP…RDKLNWFSNY (242 aa)) is uroporphyrinogen-III C-methyltransferase. P225 is a binding site for S-adenosyl-L-methionine. The Proton acceptor role is filled by D248. K270 serves as the catalytic Proton donor. Residues 301–303 (GGD), I306, 331–332 (TA), M382, and G411 each bind S-adenosyl-L-methionine.

The protein in the N-terminal section; belongs to the precorrin-2 dehydrogenase / sirohydrochlorin ferrochelatase family. This sequence in the C-terminal section; belongs to the precorrin methyltransferase family.

It carries out the reaction uroporphyrinogen III + 2 S-adenosyl-L-methionine = precorrin-2 + 2 S-adenosyl-L-homocysteine + H(+). The enzyme catalyses precorrin-2 + NAD(+) = sirohydrochlorin + NADH + 2 H(+). The catalysed reaction is siroheme + 2 H(+) = sirohydrochlorin + Fe(2+). It functions in the pathway cofactor biosynthesis; adenosylcobalamin biosynthesis; precorrin-2 from uroporphyrinogen III: step 1/1. The protein operates within cofactor biosynthesis; adenosylcobalamin biosynthesis; sirohydrochlorin from precorrin-2: step 1/1. It participates in porphyrin-containing compound metabolism; siroheme biosynthesis; precorrin-2 from uroporphyrinogen III: step 1/1. Its pathway is porphyrin-containing compound metabolism; siroheme biosynthesis; siroheme from sirohydrochlorin: step 1/1. It functions in the pathway porphyrin-containing compound metabolism; siroheme biosynthesis; sirohydrochlorin from precorrin-2: step 1/1. Multifunctional enzyme that catalyzes the SAM-dependent methylations of uroporphyrinogen III at position C-2 and C-7 to form precorrin-2 via precorrin-1. Then it catalyzes the NAD-dependent ring dehydrogenation of precorrin-2 to yield sirohydrochlorin. Finally, it catalyzes the ferrochelation of sirohydrochlorin to yield siroheme. The sequence is that of Siroheme synthase from Salmonella gallinarum (strain 287/91 / NCTC 13346).